Consider the following 273-residue polypeptide: Light-independent protochlorophyllide reductase iron-sulfur ATP-binding protein (273 aa).

ATP contacts are provided by residues 12-17 (GIGKST) and Lys41. Ser16 lines the Mg(2+) pocket. [4Fe-4S] cluster contacts are provided by Cys97 and Cys131. An ATP-binding site is contributed by 182-183 (NR).

Belongs to the NifH/BchL/ChlL family. Homodimer. Protochlorophyllide reductase is composed of three subunits; BchL, BchN and BchB. Requires [4Fe-4S] cluster as cofactor.

The enzyme catalyses chlorophyllide a + oxidized 2[4Fe-4S]-[ferredoxin] + 2 ADP + 2 phosphate = protochlorophyllide a + reduced 2[4Fe-4S]-[ferredoxin] + 2 ATP + 2 H2O. It participates in porphyrin-containing compound metabolism; bacteriochlorophyll biosynthesis (light-independent). Functionally, component of the dark-operative protochlorophyllide reductase (DPOR) that uses Mg-ATP and reduced ferredoxin to reduce ring D of protochlorophyllide (Pchlide) to form chlorophyllide a (Chlide). This reaction is light-independent. The L component serves as a unique electron donor to the NB-component of the complex, and binds Mg-ATP. The protein is Light-independent protochlorophyllide reductase iron-sulfur ATP-binding protein of Roseiflexus sp. (strain RS-1).